The sequence spans 172 residues: MAEEIKDKQEFQIGAEEPDSSNVASQAKRSAESELASTADANDKKSKKKRRRRNYDDLDEKIAQEDKASATSGANKEEDSESEVDDEKLDQMMVKEDEEEDDLSEIDSSNIITTGRRTRGKIIDYKKTAEKLEKNGEVGKDDDDDEDDEENDEEFKDPAAPAPAPASPTEPK.

Composition is skewed to basic and acidic residues over residues 1–10 and 54–68; these read MAEEIKDKQE and NYDDLDEKIAQEDKA. Residues 1–172 form a disordered region; sequence MAEEIKDKQE…PAPASPTEPK (172 aa). 2 stretches are compositionally biased toward acidic residues: residues 78 to 88 and 96 to 105; these read EDSESEVDDEK and EDEEEDDLSE. Residues 121–139 are compositionally biased toward basic and acidic residues; the sequence is KIIDYKKTAEKLEKNGEVG. The span at 140–155 shows a compositional bias: acidic residues; sequence KDDDDDEDDEENDEEF. Pro residues predominate over residues 160 to 172; the sequence is APAPAPASPTEPK.

Belongs to the CHZ1 family. In terms of assembly, forms a heterotrimer with H2A.Z-H2B, stabilizing the association of the histone dimer. Also, with a lower affinity, forms a heterotrimer with H2A-H2B.

The protein localises to the nucleus. Functionally, forms a chaperone-bound H2A.Z-H2B complex that acts as a source for SWR1 complex-dependent H2A to H2A.Z histone replacement in chromatin. This Kluyveromyces lactis (strain ATCC 8585 / CBS 2359 / DSM 70799 / NBRC 1267 / NRRL Y-1140 / WM37) (Yeast) protein is Histone H2A.Z-specific chaperone CHZ1 (CHZ1).